The following is a 743-amino-acid chain: MLKQFTHYCEMQAELIPEGPNGEGRLSNQNSNPNLLSSASISITQFPAKKPTRQWAAWTHQEEESFFTALRQVGKNFEKITSRVQSKNKDQVRHYYYRLVRRMNKLLGPDLSLDAKNPKDTNAAMLRWWSLLEKYSCKASKLHLKPRRFKLFIEALEHQLLKDRRKSIRKRTCQGENLSSASLGNISSHSRERGLDNRPFKLILSDGQNVKKLGPGRASTKHGESLSVNLGDEKEDTAFGRGGRQRRKQGYRKWEKAAIDGVSLVADAAEHLERTSIDKDMDDQTDLGPTRYLTGKSPLSLCSAGDVPLSDANMQFSAKLKLQLFPIDECTRRSLEMDKHNPHLELTLSNRKKISSVLEHLNRKWGSSSCATGELLLFPYNARKETVTCHQRWTHDSFLSAAEVHSMVGSPSVFRLRYGWFVHDASGSIISQVPTSDPCPSLEDDMNVDRLNEVNMLLTESGPLSVHSTAEQTTSVEPSQGLVCASGVHDRPARSRDDYEPASTSITPLEHLSGGNAQSPGEWADSLTNISIGDLLSEVPDDIDSDGVDPPATEGSHYLLRDVPFTSDSFDAAIAAHILRHQNKPSAQLPLTSGSSSLWDDEETRDAFSFQKNRFANSTELASVASPKGVGRVNGEPSQLVEASSGDEGSYNPHDDGDPMEEGPADPHTMDSPGKTPCGLADVYWPDSLGPLDLDIRSSKYTDDLILSESLGGLSRLIATSLDAFQNCSLFGFDNKKDKSNMV.

The SANT domain maps to 53-104 (RQWAAWTHQEEESFFTALRQVGKNFEKITSRVQSKNKDQVRHYYYRLVRRMN). Disordered stretches follow at residues 486–523 (SGVH…PGEW) and 626–679 (SPKG…TPCG). Positions 488–499 (VHDRPARSRDDY) are enriched in basic and acidic residues.

In terms of assembly, interacts only with active kinase forms of TOUSLED. Interacts with SNL1. Phosphorylated in vitro by TOUSLED. Expressed in flowers, roots and leaves.

The protein localises to the nucleus. The protein is TSL-kinase interacting protein 1 (TKI1) of Arabidopsis thaliana (Mouse-ear cress).